The sequence spans 146 residues: 3-dehydroquinate dehydratase (146 aa).

Catalysis depends on Tyr-23, which acts as the Proton acceptor. The substrate site is built by Asn-74, His-80, and Asp-87. His-100 (proton donor) is an active-site residue. Residues 101–102 and Arg-111 each bind substrate; that span reads IS.

Belongs to the type-II 3-dehydroquinase family. In terms of assembly, homododecamer.

It carries out the reaction 3-dehydroquinate = 3-dehydroshikimate + H2O. It participates in metabolic intermediate biosynthesis; chorismate biosynthesis; chorismate from D-erythrose 4-phosphate and phosphoenolpyruvate: step 3/7. Functionally, catalyzes a trans-dehydration via an enolate intermediate. This Bacillus cereus (strain ATCC 10987 / NRS 248) protein is 3-dehydroquinate dehydratase.